Consider the following 336-residue polypeptide: Glycerol-3-phosphate dehydrogenase [NAD(P)+] (336 aa).

NADPH contacts are provided by serine 14, tryptophan 15, arginine 35, arginine 36, and lysine 109. Sn-glycerol 3-phosphate is bound by residues lysine 109 and glycine 139. Position 143 (alanine 143) interacts with NADPH. Sn-glycerol 3-phosphate contacts are provided by lysine 194, aspartate 247, serine 257, arginine 258, and asparagine 259. Lysine 194 (proton acceptor) is an active-site residue. Arginine 258 is an NADPH binding site. Residue glutamate 284 coordinates NADPH.

Belongs to the NAD-dependent glycerol-3-phosphate dehydrogenase family.

It localises to the cytoplasm. It catalyses the reaction sn-glycerol 3-phosphate + NAD(+) = dihydroxyacetone phosphate + NADH + H(+). The catalysed reaction is sn-glycerol 3-phosphate + NADP(+) = dihydroxyacetone phosphate + NADPH + H(+). The protein operates within membrane lipid metabolism; glycerophospholipid metabolism. Catalyzes the reduction of the glycolytic intermediate dihydroxyacetone phosphate (DHAP) to sn-glycerol 3-phosphate (G3P), the key precursor for phospholipid synthesis. The polypeptide is Glycerol-3-phosphate dehydrogenase [NAD(P)+] (Streptomyces coelicolor (strain ATCC BAA-471 / A3(2) / M145)).